Consider the following 238-residue polypeptide: Uridylate kinase (238 aa).

An ATP-binding site is contributed by 12 to 15 (KLSG). The segment at 20–25 (GEKGFG) is involved in allosteric activation by GTP. Gly-54 is a binding site for UMP. ATP contacts are provided by Gly-55 and Arg-59. Residues Asp-72 and 133 to 140 (TGNPYFST) contribute to the UMP site. Residues Tyr-166 and Asp-169 each coordinate ATP.

The protein belongs to the UMP kinase family. As to quaternary structure, homohexamer.

The protein resides in the cytoplasm. It catalyses the reaction UMP + ATP = UDP + ADP. It functions in the pathway pyrimidine metabolism; CTP biosynthesis via de novo pathway; UDP from UMP (UMPK route): step 1/1. With respect to regulation, allosterically activated by GTP. Inhibited by UTP. Catalyzes the reversible phosphorylation of UMP to UDP. This is Uridylate kinase from Clostridium botulinum (strain Hall / ATCC 3502 / NCTC 13319 / Type A).